The primary structure comprises 147 residues: Calcium-regulated heat-stable protein 1 (147 aa).

Residues 1-12 (MSSEPPPPPQPP) show a composition bias toward pro residues. Residues 1–52 (MSSEPPPPPQPPTHQASVGLLDTPRSRERSPSPLRGNVVPSPLPTRRTRTFS) are disordered. The residue at position 2 (Ser2) is an N-acetylserine. Ser30, Ser32, and Ser41 each carry phosphoserine. Thr45 is subject to Phosphothreonine. Phosphoserine is present on residues Ser52 and Ser58. The CSD domain occupies 62-129 (VYKGVCKCFC…KLQAVEVVIT (68 aa)). Phosphoserine occurs at positions 146 and 147.

Homodimer. Interacts with STYX. In terms of processing, dephosphorylated by calcineurin in a Ca(2+) dependent manner. Can be phosphorylated by DYRK2 (in vitro).

The protein localises to the cytoplasm. It localises to the P-body. The protein resides in the cytoplasmic granule. Binds mRNA and regulates the stability of target mRNA. Binds single-stranded DNA (in vitro). This Homo sapiens (Human) protein is Calcium-regulated heat-stable protein 1 (CARHSP1).